We begin with the raw amino-acid sequence, 108 residues long: Large ribosomal subunit protein uL24 (108 aa).

It belongs to the universal ribosomal protein uL24 family. Part of the 50S ribosomal subunit.

In terms of biological role, one of two assembly initiator proteins, it binds directly to the 5'-end of the 23S rRNA, where it nucleates assembly of the 50S subunit. Functionally, one of the proteins that surrounds the polypeptide exit tunnel on the outside of the subunit. The protein is Large ribosomal subunit protein uL24 of Frankia casuarinae (strain DSM 45818 / CECT 9043 / HFP020203 / CcI3).